Reading from the N-terminus, the 480-residue chain is UDP-glucose 6-dehydrogenase 5 (480 aa).

Residues 8–13 (GAGYVG), Asp-33, Arg-38, 86–90 (VNTPT), 127–128 (ST), and Glu-161 contribute to the NAD(+) site. Residues 157–161 (EFLAE), 216–223 (KLAANAFL), and 256–269 (RIGPKFLNASVGFG) contribute to the substrate site. The active-site Nucleophile is the Cys-272. 272–275 (CFQK) is an NAD(+) binding site. 334-335 (FK) is a substrate binding site. Arg-342 provides a ligand contact to NAD(+). Ser-393 carries the post-translational modification Phosphoserine. Substrate is bound at residue Arg-447.

Belongs to the UDP-glucose/GDP-mannose dehydrogenase family.

It carries out the reaction UDP-alpha-D-glucose + 2 NAD(+) + H2O = UDP-alpha-D-glucuronate + 2 NADH + 3 H(+). Its pathway is nucleotide-sugar biosynthesis; UDP-alpha-D-glucuronate biosynthesis; UDP-alpha-D-glucuronate from UDP-alpha-D-glucose: step 1/1. Involved in the biosynthesis of UDP-glucuronic acid (UDP-GlcA), providing nucleotide sugars for cell-wall polymers. The sequence is that of UDP-glucose 6-dehydrogenase 5 (UGD5) from Oryza sativa subsp. japonica (Rice).